The chain runs to 252 residues: MIATLGNLIIPVIFVNYVASETYKLTQRAFDTNFSSTRYDLKNSISRSLYDNPCMGDCVNYTCVVNAFGELEICVTAVDTVRIRHPAAGVLQRDVKYCRGSCVNDTNAPWCIVDTSGSFDLCGPFDAGSKVDSLAYEFLEDRVSFTGRSYGCESGCERTTAPCRVGGTSLPVLCSPIAFVLPPTTPTLKRRTKRNAFVDCFSRNTLLGNNVSSSFIKYLDMFNAEWIDYNVRGHQDDDRIRTIHYGHPYCRR.

An N-terminal signal peptide occupies residues Met1–Ser20.

This sequence belongs to the ascovirus HvAV ORF17 family.

This is an uncharacterized protein from Spodoptera frugiperda ascovirus 1a (SfAV-1a).